Reading from the N-terminus, the 619-residue chain is DNA mismatch repair protein MutL (619 aa).

Residues 368 to 378 (VDEPKQVDEPK) show a composition bias toward basic and acidic residues. Residues 368–403 (VDEPKQVDEPKQSSPVQEPKEEIPSFLPTVESKQND) form a disordered region.

The protein belongs to the DNA mismatch repair MutL/HexB family.

Functionally, this protein is involved in the repair of mismatches in DNA. It is required for dam-dependent methyl-directed DNA mismatch repair. May act as a 'molecular matchmaker', a protein that promotes the formation of a stable complex between two or more DNA-binding proteins in an ATP-dependent manner without itself being part of a final effector complex. The polypeptide is DNA mismatch repair protein MutL (Geobacillus sp. (strain WCH70)).